A 236-amino-acid chain; its full sequence is Small ribosomal subunit protein uS3 (236 aa).

The region spanning Ile-39 to His-107 is the KH type-2 domain. Residues Glu-216–Ala-236 are disordered.

It belongs to the universal ribosomal protein uS3 family. Part of the 30S ribosomal subunit. Forms a tight complex with proteins S10 and S14.

Its function is as follows. Binds the lower part of the 30S subunit head. Binds mRNA in the 70S ribosome, positioning it for translation. The chain is Small ribosomal subunit protein uS3 from Bartonella henselae (strain ATCC 49882 / DSM 28221 / CCUG 30454 / Houston 1) (Rochalimaea henselae).